Consider the following 582-residue polypeptide: Zinc finger protein 614 (582 aa).

The KRAB domain occupies 8–79 (LTLEDVAVEF…VAKIQNKNCP (72 aa)). The segment at 202 to 224 (HACIECEQTFLRKSQLIYHENIH) adopts a C2H2-type 1 zinc-finger fold. The segment at 254–278 (KICIPNEYRKGSTVNSRLIAHQQTH) adopts a C2H2-type 2; degenerate zinc-finger fold. 10 consecutive C2H2-type zinc fingers follow at residues 284-306 (YMCSECGKGFTMKRYLIAHQRTH), 312-334 (YVCNECGKGFTVKSNLIVHQRTH), 340-362 (YICSECGKGFTMKRYLVVHQRTH), 368-390 (YICSECGKGFTVKSNLIVHQRSH), 396-418 (YICSECGKGFTVKRTLIIHQRTH), 424-446 (YICNECGKGFTTKRTLIIHQRTH), 452-474 (YECNECGKAFSQKICLIQHERCH), 480-502 (FVCTECGKSYSHKYGLITHQRIH), 508-530 (YECNECGKAFTTKSVLNVHQRTH), and 536-558 (YGCSDCEKAFSHLSNLVKHKKMH).

This sequence belongs to the krueppel C2H2-type zinc-finger protein family.

The protein resides in the nucleus. May be involved in transcriptional regulation. The protein is Zinc finger protein 614 (ZNF614) of Macaca fascicularis (Crab-eating macaque).